The following is a 496-amino-acid chain: ATP synthase subunit beta 1 (496 aa).

167–174 (GGAGVGKT) is a binding site for ATP. The segment at 474–496 (REAAAAQQSTAQQAAPAEKEPAA) is disordered. Low complexity predominate over residues 476 to 489 (AAAAQQSTAQQAAP).

The protein belongs to the ATPase alpha/beta chains family. In terms of assembly, F-type ATPases have 2 components, CF(1) - the catalytic core - and CF(0) - the membrane proton channel. CF(1) has five subunits: alpha(3), beta(3), gamma(1), delta(1), epsilon(1). CF(0) has three main subunits: a(1), b(2) and c(9-12). The alpha and beta chains form an alternating ring which encloses part of the gamma chain. CF(1) is attached to CF(0) by a central stalk formed by the gamma and epsilon chains, while a peripheral stalk is formed by the delta and b chains.

The protein resides in the cell inner membrane. The catalysed reaction is ATP + H2O + 4 H(+)(in) = ADP + phosphate + 5 H(+)(out). Its function is as follows. Produces ATP from ADP in the presence of a proton gradient across the membrane. The catalytic sites are hosted primarily by the beta subunits. In Paraburkholderia xenovorans (strain LB400), this protein is ATP synthase subunit beta 1.